The following is a 142-amino-acid chain: Organic hydroperoxide resistance protein-like 2 (142 aa).

It belongs to the OsmC/Ohr family.

This Staphylococcus epidermidis (strain ATCC 35984 / DSM 28319 / BCRC 17069 / CCUG 31568 / BM 3577 / RP62A) protein is Organic hydroperoxide resistance protein-like 2.